The primary structure comprises 133 residues: MDVIHLFLATLLVSLCFLTAYSHLSPEEKPKDDRSLRNNSSMNLLDSPSVSIMALNKKSKKISRKEAEKKKRSSKKKASMTKVARPRLLQPAPCVATRDSCKPPAPACCDPCASCQCRFFRSACSCRVLTRTC.

Residues 1-22 (MDVIHLFLATLLVSLCFLTAYS) form the signal peptide. A compositionally biased stretch (basic and acidic residues) spans 26-36 (PEEKPKDDRSL). Residues 26 to 83 (PEEKPKDDRSLRNNSSMNLLDSPSVSIMALNKKSKKISRKEAEKKKRSSKKKASMTKV) are disordered. Residues 37-50 (RNNSSMNLLDSPSV) show a composition bias toward polar residues. Asparagine 38 and asparagine 39 each carry an N-linked (GlcNAc...) asparagine glycan. The span at 70 to 79 (KKRSSKKKAS) shows a compositional bias: basic residues. 5 disulfide bridges follow: cysteine 94-cysteine 109, cysteine 101-cysteine 115, cysteine 108-cysteine 126, cysteine 112-cysteine 133, and cysteine 117-cysteine 124. Residues 94–133 (CVATRDSCKPPAPACCDPCASCQCRFFRSACSCRVLTRTC) enclose the Agouti domain.

It is found in the secreted. Involved in the regulation of melanogenesis. The binding of ASP to MC1R precludes alpha-MSH initiated signaling and thus blocks production of cAMP, leading to a down-regulation of eumelanogenesis (brown/black pigment) and thus increasing synthesis of pheomelanin (yellow/red pigment). This chain is Agouti-signaling protein (ASIP), found in Equus caballus (Horse).